The primary structure comprises 342 residues: Ribosomal RNA small subunit methyltransferase H (342 aa).

S-adenosyl-L-methionine is bound by residues 62-64, Asp-82, Phe-108, Asp-129, and Gln-136; that span reads GGH. Residues 280–319 form a disordered region; that stretch reads RHSKGQYPEDENLPMPPKRPRYFSKPKRVGPSKAEISHNP. Residues 297-309 show a composition bias toward basic residues; sequence KRPRYFSKPKRVG.

It belongs to the methyltransferase superfamily. RsmH family.

It is found in the cytoplasm. The catalysed reaction is cytidine(1402) in 16S rRNA + S-adenosyl-L-methionine = N(4)-methylcytidine(1402) in 16S rRNA + S-adenosyl-L-homocysteine + H(+). Specifically methylates the N4 position of cytidine in position 1402 (C1402) of 16S rRNA. The polypeptide is Ribosomal RNA small subunit methyltransferase H (Psychrobacter cryohalolentis (strain ATCC BAA-1226 / DSM 17306 / VKM B-2378 / K5)).